A 450-amino-acid chain; its full sequence is Transcription factor AP-2 gamma (450 aa).

Lys-10 is covalently cross-linked (Glycyl lysine isopeptide (Lys-Gly) (interchain with G-Cter in SUMO)). Disordered stretches follow at residues 13-63 (EDCE…FPPP) and 90-126 (LHQPAPTGSQQQAWPGRQSQEGAGLPSHHGRPAGLLP). A PPxY motif motif is present at residues 59 to 64 (YFPPPY). Polar residues predominate over residues 95 to 110 (PTGSQQQAWPGRQSQE). The residue at position 252 (Ser-252) is a Phosphoserine; by PKA. The segment at 293 to 424 (RRKAAHVTLL…YIKEALIVID (132 aa)) is H-S-H (helix-span-helix), dimerization. The interval 431–450 (GDQSPADSNKTLEKMEKHRK) is disordered. The residue at position 434 (Ser-434) is a Phosphoserine. A compositionally biased stretch (basic and acidic residues) spans 440 to 450 (KTLEKMEKHRK).

This sequence belongs to the AP-2 family. Binds DNA as a dimer. Can form homodimers or heterodimers with other AP-2 family members. Interacts with WWOX. Interacts with UBE2I. Interacts with KCTD1; this interaction represses transcription activation. Interacts with CITED2 (via C-terminus); the interaction stimulates TFAP2B-transcriptional activity. Interacts with CITED4. Interacts with MTA1. Post-translationally, sumoylated on Lys-10; which inhibits transcriptional activity.

The protein localises to the nucleus. In terms of biological role, sequence-specific DNA-binding transcription factor that interacts with cellular enhancer elements to regulate transcription of selected genes, and which plays a key role in early embryonic development. AP-2 factors bind to the consensus sequence 5'-GCCNNNGGC-3' and activate genes involved in a large spectrum of important biological functions. TFAP2C plays a key role in early embryonic development by regulating both inner cell mass (ICM) and trophectoderm differentiation. At the 8-cell stage, during morula development, controls expression of cell-polarity genes. Upon trophoblast commitment, binds to late trophectoderm genes in blastocysts together with CDX2, and later to extra-embryonic ectoderm genes together with SOX2. Binds to both closed and open chromatin with other transcription factors. Involved in the MTA1-mediated epigenetic regulation of ESR1 expression in breast cancer. The protein is Transcription factor AP-2 gamma (TFAP2C) of Homo sapiens (Human).